A 55-amino-acid polypeptide reads, in one-letter code: Large ribosomal subunit protein bL33 (55 aa).

The protein belongs to the bacterial ribosomal protein bL33 family.

The sequence is that of Large ribosomal subunit protein bL33 from Yersinia pestis (strain Pestoides F).